Reading from the N-terminus, the 116-residue chain is Large ribosomal subunit protein bL17 (116 aa).

The protein belongs to the bacterial ribosomal protein bL17 family. Part of the 50S ribosomal subunit. Contacts protein L32.

In Synechococcus sp. (strain JA-2-3B'a(2-13)) (Cyanobacteria bacterium Yellowstone B-Prime), this protein is Large ribosomal subunit protein bL17.